Reading from the N-terminus, the 434-residue chain is Nicotinate phosphoribosyltransferase (434 aa).

Residue histidine 242 is modified to Phosphohistidine; by autocatalysis.

Belongs to the NAPRTase family. Transiently phosphorylated on a His residue during the reaction cycle. Phosphorylation strongly increases the affinity for substrates and increases the rate of nicotinate D-ribonucleotide production. Dephosphorylation regenerates the low-affinity form of the enzyme, leading to product release.

The catalysed reaction is nicotinate + 5-phospho-alpha-D-ribose 1-diphosphate + ATP + H2O = nicotinate beta-D-ribonucleotide + ADP + phosphate + diphosphate. It functions in the pathway cofactor biosynthesis; NAD(+) biosynthesis; nicotinate D-ribonucleotide from nicotinate: step 1/1. Functionally, catalyzes the synthesis of beta-nicotinate D-ribonucleotide from nicotinate and 5-phospho-D-ribose 1-phosphate at the expense of ATP. The polypeptide is Nicotinate phosphoribosyltransferase (Brucella abortus (strain S19)).